Reading from the N-terminus, the 618-residue chain is MAVALLDDWCKGMDLDPKKAVLIVGIPVQYTEAAINDALKEGLPPLCAYKVIGRMFRREDEAKAVLIELPEVVDYTMMPTHIPAEGGAWEVVVKPRSPDDEFMNKLIYFLRDEGRRIVDVAKALGFSTVPTGKIELKNLDQDKPKGLKSLCNNSTCYKKLKVFSGSPFPGPGEESFETWLEEVTELMQLWQVSEREKKQCLLESLRGSALSIMQALWTSNDSLTVEQCLKALKHIFGNKEDSKVLQFRFLQSSQKPAEKVSDYLLRLEPLLQKAVQQSPLSAHSADSIRLKHVLSQVSMTTGLRGKLSLLDQQGCPPTFLELMKLTRDEEEWESTVVVEEQEQVRRDSSACEAANEVVTQAEDSREVSTQTTGEEMTSVKRRRLLWRHSAGEEGQRKESGFWAESEPDEQKPYVRAQESGNERGAWAVSHPNPKEIEAQDSQEFLPVAGNRDTLTKSWGSPDKGTGDMSVAEGQQGQGKAPNFLLARNDPNKQEQIPHSSVTTKWQDRGECQRLKWGASMITRPQGNPDRSWDTSGSQDGEDGCSELRMPTGTEAAQGVEEPATGLSWAEDTSAWEQARLGRETVPRRGGRRIQPVFRIIYTALGEPHEGSTLESFRE.

Residues 390-399 (AGEEGQRKES) show a composition bias toward basic and acidic residues. Disordered regions lie at residues 390–409 (AGEE…EPDE), 451–475 (RDTL…EGQQ), and 519–549 (SMIT…ELRM).

It belongs to the PNMA family. As to expression, restricted to testis, where expression is low. Not detected in the brain.

It localises to the nucleus. The chain is Paraneoplastic antigen-like protein 5 (Pnma5) from Mus musculus (Mouse).